A 430-amino-acid chain; its full sequence is Cysteate synthase (430 aa).

The residue at position 106 (Lys-106) is an N6-(pyridoxal phosphate)lysine. Pyridoxal 5'-phosphate contacts are provided by Asn-132 and Thr-381.

Belongs to the threonine synthase family. Cysteate synthase subfamily. As to quaternary structure, homotrimer. It depends on pyridoxal 5'-phosphate as a cofactor.

The catalysed reaction is O-phospho-L-serine + sulfite + H(+) = L-cysteate + phosphate. It functions in the pathway cofactor biosynthesis; coenzyme M biosynthesis. Functionally, specifically catalyzes the beta-elimination of phosphate from L-phosphoserine and the beta-addition of sulfite to the dehydroalanine intermediate to produce L-cysteate. The protein is Cysteate synthase of Methanoculleus marisnigri (strain ATCC 35101 / DSM 1498 / JR1).